An 804-amino-acid polypeptide reads, in one-letter code: DNA gyrase subunit A (804 aa).

The Topo IIA-type catalytic domain occupies 31–495; the sequence is IPDVRDGLKP…QSIEYNEEEL (465 aa). Tyr119 serves as the catalytic O-(5'-phospho-DNA)-tyrosine intermediate. Residues 522-528 carry the GyrA-box motif; the sequence is QKRGGKG.

Belongs to the type II topoisomerase GyrA/ParC subunit family. In terms of assembly, heterotetramer, composed of two GyrA and two GyrB chains. In the heterotetramer, GyrA contains the active site tyrosine that forms a transient covalent intermediate with DNA, while GyrB binds cofactors and catalyzes ATP hydrolysis.

It localises to the cytoplasm. The enzyme catalyses ATP-dependent breakage, passage and rejoining of double-stranded DNA.. Functionally, a type II topoisomerase that negatively supercoils closed circular double-stranded (ds) DNA in an ATP-dependent manner to modulate DNA topology and maintain chromosomes in an underwound state. Negative supercoiling favors strand separation, and DNA replication, transcription, recombination and repair, all of which involve strand separation. Also able to catalyze the interconversion of other topological isomers of dsDNA rings, including catenanes and knotted rings. Type II topoisomerases break and join 2 DNA strands simultaneously in an ATP-dependent manner. This Thermotoga maritima (strain ATCC 43589 / DSM 3109 / JCM 10099 / NBRC 100826 / MSB8) protein is DNA gyrase subunit A.